The sequence spans 337 residues: L-Ala-D/L-amino acid epimerase (337 aa).

Residues threonine 129 and 151-153 (KIK) each bind substrate. Aspartate 177, glutamate 203, and aspartate 228 together coordinate Mg(2+). Substrate contacts are provided by residues lysine 250 and 300–302 (DMD).

The protein belongs to the mandelate racemase/muconate lactonizing enzyme family. Mg(2+) is required as a cofactor.

In terms of biological role, broad specificity dipeptide epimerase. Catalyzes the epimerization of L-Ala-L-Ala, L-Ala-L-Glu, L-Ala-L-Ser, L-Ala-L-Thr and L-Ala-L-Met (in vitro). The polypeptide is L-Ala-D/L-amino acid epimerase (Maribacter sp. (strain HTCC2170 / KCCM 42371)).